A 709-amino-acid polypeptide reads, in one-letter code: Elongation factor G (709 aa).

Residues 9–295 (AKVRNIGIMA…AVVRYLPTPL (287 aa)) enclose the tr-type G domain. GTP-binding positions include 18–25 (AHIDAGKT), 86–90 (DTPGH), and 140–143 (NKLD).

This sequence belongs to the TRAFAC class translation factor GTPase superfamily. Classic translation factor GTPase family. EF-G/EF-2 subfamily.

It is found in the cytoplasm. Catalyzes the GTP-dependent ribosomal translocation step during translation elongation. During this step, the ribosome changes from the pre-translocational (PRE) to the post-translocational (POST) state as the newly formed A-site-bound peptidyl-tRNA and P-site-bound deacylated tRNA move to the P and E sites, respectively. Catalyzes the coordinated movement of the two tRNA molecules, the mRNA and conformational changes in the ribosome. The protein is Elongation factor G of Streptomyces avermitilis (strain ATCC 31267 / DSM 46492 / JCM 5070 / NBRC 14893 / NCIMB 12804 / NRRL 8165 / MA-4680).